We begin with the raw amino-acid sequence, 83 residues long: MNYLVMISLALLLMIGVESVRDGYIVYPHNCVYHCIPSCDGLCKENGATSGSCGYIIKVGIACWCKDLPENVPIYDRSYKCYR.

Residues 1–19 form the signal peptide; that stretch reads MNYLVMISLALLLMIGVES. An LCN-type CS-alpha/beta domain is found at 21-82; the sequence is RDGYIVYPHN…PIYDRSYKCY (62 aa). 4 disulfide bridges follow: C31-C81, C35-C53, C39-C63, and C43-C65.

The protein belongs to the long (4 C-C) scorpion toxin superfamily. Sodium channel inhibitor family. Alpha subfamily. In terms of processing, the C-terminal basic residue is removed by a carboxypeptidase. Expressed by the venom gland.

It localises to the secreted. In terms of biological role, alpha toxins bind voltage-independently at site-3 of sodium channels (Nav) and inhibit the inactivation of the activated channels, thereby blocking neuronal transmission. This chain is Toxin Aam1 (H1), found in Androctonus amoreuxi (African fattail scorpion).